A 1042-amino-acid polypeptide reads, in one-letter code: Elongation factor 3 (1042 aa).

6 HEAT repeats span residues 9–46 (KVLM…DPDT), 86–124 (PYLV…TMNP), 167–204 (YRLP…LISN), 206–242 (DIDK…EVHA), 243–280 (STLS…LVED), and 289–327 (PKLI…VKEG). ABC transporter domains lie at 425 to 642 (EEGE…YQDI) and 668 to 994 (CRMR…EQEE). ADP contacts are provided by Asn704, Glu923, Asn926, and His952. The segment at 1009-1042 (KKAKKLTSSELRKKKKERMARRKKGEEVFSDEDD) is disordered. Positions 1020 to 1031 (RKKKKERMARRK) are enriched in basic residues.

It belongs to the ABC transporter superfamily. ABCF family. EF3 subfamily. In terms of assembly, monomer.

It is found in the cytoplasm. It carries out the reaction ATP + H2O = ADP + phosphate + H(+). Its pathway is protein biosynthesis; polypeptide chain elongation. Its function is as follows. Ribosome-dependent ATPase that functions in cytoplasmic translation elongation. Required for the ATP-dependent release of deacylated tRNA from the ribosomal E-site during protein biosynthesis. Stimulates the eEF1A-dependent binding of aminoacyl-tRNA to the ribosomal A-site, which has reduced affinity for tRNA as long as the E-site is occupied. Assists translation termination by stimulating the release of nascent protein from the ribosome by release factors. The polypeptide is Elongation factor 3 (TEF3) (Pneumocystis carinii).